Here is a 715-residue protein sequence, read N- to C-terminus: Polyribonucleotide nucleotidyltransferase (715 aa).

2 residues coordinate Mg(2+): Asp498 and Asp504. Residues Pro565–Ile625 form the KH domain. The S1 motif domain occupies Gly635–Leu706.

The protein belongs to the polyribonucleotide nucleotidyltransferase family. It depends on Mg(2+) as a cofactor.

The protein resides in the cytoplasm. The catalysed reaction is RNA(n+1) + phosphate = RNA(n) + a ribonucleoside 5'-diphosphate. Involved in mRNA degradation. Catalyzes the phosphorolysis of single-stranded polyribonucleotides processively in the 3'- to 5'-direction. This is Polyribonucleotide nucleotidyltransferase from Onion yellows phytoplasma (strain OY-M).